The following is a 481-amino-acid chain: Chromosomal replication initiator protein DnaA (481 aa).

The interval 1–74 (MSQDLWSFCL…ELGAEFHGAP (74 aa)) is domain I, interacts with DnaA modulators. The segment at 74–144 (PIEIELVLPA…TASDLAYEKT (71 aa)) is domain II. A disordered region spans residues 101 to 123 (AGPAPAPTPSQAPAATAAAPAVV). The span at 111 to 123 (QAPAATAAAPAVV) shows a compositional bias: low complexity. The interval 145–361 (RLNADFTFDT…GALNKVVAFA (217 aa)) is domain III, AAA+ region. ATP contacts are provided by glycine 189, glycine 191, lysine 192, and threonine 193. The tract at residues 362-481 (RFHGRGITLE…VHVLTQVLRG (120 aa)) is domain IV, binds dsDNA.

This sequence belongs to the DnaA family. In terms of assembly, oligomerizes as a right-handed, spiral filament on DNA at oriC.

It is found in the cytoplasm. Functionally, plays an essential role in the initiation and regulation of chromosomal replication. ATP-DnaA binds to the origin of replication (oriC) to initiate formation of the DNA replication initiation complex once per cell cycle. Binds the DnaA box (a 9 base pair repeat at the origin) and separates the double-stranded (ds)DNA. Forms a right-handed helical filament on oriC DNA; dsDNA binds to the exterior of the filament while single-stranded (ss)DNA is stabiized in the filament's interior. The ATP-DnaA-oriC complex binds and stabilizes one strand of the AT-rich DNA unwinding element (DUE), permitting loading of DNA polymerase. After initiation quickly degrades to an ADP-DnaA complex that is not apt for DNA replication. Binds acidic phospholipids. This chain is Chromosomal replication initiator protein DnaA, found in Aromatoleum aromaticum (strain DSM 19018 / LMG 30748 / EbN1) (Azoarcus sp. (strain EbN1)).